The primary structure comprises 209 residues: Protein ASG7 (209 aa).

Over 1–49 (MTTLASSIEHKTKHLAAPFENDENTWMKKYCCQCKSCKMSVPVQPWLPR) the chain is Lumenal. Residues 50 to 70 (FFVFGILCPVFWLVNLLAWWF) form a helical membrane-spanning segment. Over 71-184 (LQYWQPHELE…LLRKTFRNWN (114 aa)) the chain is Cytoplasmic. Phosphoserine is present on residues Ser121, Ser123, and Ser125. Thr153 bears the Phosphothreonine mark. Residues 185–205 (LRSLLGLLIDSILIIFVVLLC) traverse the membrane as a helical segment. Topologically, residues 206 to 209 (KKSR) are lumenal.

It is found in the endomembrane system. In terms of biological role, required for receptor inhibition of inappropriately expressed a-factor receptor (STE3) in MAT a cells. Inhibits signaling by relocalizing the G protein beta-gamma (STE4-STE18) subunit to intracellular membranes. May also be a mechanism for the down-regulation of the mating pheromone response after the zygotic fusion event, promoting the transition of the new diploid cell to vegetative growth. In Saccharomyces cerevisiae (strain YJM789) (Baker's yeast), this protein is Protein ASG7 (ASG7).